Here is an 858-residue protein sequence, read N- to C-terminus: Bifunctional uridylyltransferase/uridylyl-removing enzyme (858 aa).

The interval 1 to 324 (MSASVAEPPP…PATSGVTRVL (324 aa)) is uridylyltransferase. The interval 325-681 (SPGRFVEKQG…ARPSPVGDAL (357 aa)) is uridylyl-removing. Positions 443–565 (VDQHILMVLR…VGSERRLTAL (123 aa)) constitute an HD domain. ACT domains follow at residues 682–761 (QVLV…PEPS) and 790–858 (ILSV…AIAV).

The protein belongs to the GlnD family. Mg(2+) is required as a cofactor.

It catalyses the reaction [protein-PII]-L-tyrosine + UTP = [protein-PII]-uridylyl-L-tyrosine + diphosphate. The enzyme catalyses [protein-PII]-uridylyl-L-tyrosine + H2O = [protein-PII]-L-tyrosine + UMP + H(+). With respect to regulation, uridylyltransferase (UTase) activity is inhibited by glutamine, while glutamine activates uridylyl-removing (UR) activity. Modifies, by uridylylation and deuridylylation, the PII regulatory proteins (GlnB and homologs), in response to the nitrogen status of the cell that GlnD senses through the glutamine level. Under low glutamine levels, catalyzes the conversion of the PII proteins and UTP to PII-UMP and PPi, while under higher glutamine levels, GlnD hydrolyzes PII-UMP to PII and UMP (deuridylylation). Thus, controls uridylylation state and activity of the PII proteins, and plays an important role in the regulation of nitrogen assimilation and metabolism. The polypeptide is Bifunctional uridylyltransferase/uridylyl-removing enzyme (Burkholderia pseudomallei (strain K96243)).